The chain runs to 341 residues: GTP-binding protein REM 2 (341 aa).

The span at 1–13 (MHTDLDTDMDMDT) shows a compositional bias: acidic residues. 2 disordered regions span residues 1-71 (MHTD…GSMP) and 84-106 (VDEL…GSGE). The segment covering 18–30 (LCSSSSRQASPLG) has biased composition (polar residues). S27 bears the Phosphoserine mark. The segment covering 90 to 106 (PPQASPSGSSDSLGSGE) has biased composition (low complexity). GTP-binding positions include 122-129 (GESGVGKS), 230-233 (NKSD), and 261-262 (AA). The segment at 282 to 309 (RGRGHAGGQRPEPSSPDGPAPPTRRESL) is disordered. Residues 294 to 303 (PSSPDGPAPP) show a composition bias toward pro residues. S296 carries the post-translational modification Phosphoserine.

It belongs to the small GTPase superfamily. RGK family.

The protein resides in the cell membrane. Functionally, binds GTP saturably and exhibits a low intrinsic rate of GTP hydrolysis. This Mus musculus (Mouse) protein is GTP-binding protein REM 2 (Rem2).